The sequence spans 467 residues: Glycine--tRNA ligase (467 aa).

Residues R100 and E175 each coordinate substrate. Residues R207 to E209, F217 to F222, E291 to L292, and G335 to R338 contribute to the ATP site. F222–E226 serves as a coordination point for substrate. E331 to G335 lines the substrate pocket.

It belongs to the class-II aminoacyl-tRNA synthetase family. In terms of assembly, homodimer.

It localises to the cytoplasm. The catalysed reaction is tRNA(Gly) + glycine + ATP = glycyl-tRNA(Gly) + AMP + diphosphate. In terms of biological role, catalyzes the attachment of glycine to tRNA(Gly). This Clostridium perfringens (strain 13 / Type A) protein is Glycine--tRNA ligase.